Here is a 492-residue protein sequence, read N- to C-terminus: MDPYKYRSSSAFNTPFWTTNSGAPVWNNNSSLTVGTRGPILLEDYHLVEKLANFDRERIPERVVHARGASAKGFFEVTHDISHLTCADFLRAPGVQTPVIVRFSTVIHERGSPETLRDPRGFAVKFYTREGNFDLVGNNFPVFFVRDGMKFPDMVHALKPNPKSHIQENWRILDFFSHHPESLHMFTFLFDDLGVPQDYRHMEGSGVNTYTLINKAGKAQYVKFHWKPTCGVKCLLEDEAIKVGGANHSHATKDLYDSISAGNYPEWKLFIQIIEPDHEDKFDFDPLDVTKTWPEDIIPLMPVGRLVLNKNIDNFFAENEQLAFCPALIVPGVYYSDDKLLQTRIFSYADTQRHRLGPNYLQLPPNAPKCAHHNNHHEGLMNFMHRDEEVNYFPSRFDPVRHAERHPIPPPVLTGKRDRCMIEKENNFKQPGERYRTFAPDRQERFVCRWVDALSDPRVTHEIRSIWISYWTQADKSLGQKLASRLNVRPTM.

Residues His65 and Asn138 contribute to the active site. Tyr348 is a binding site for heme.

It belongs to the catalase family. As to quaternary structure, homotetramer. Requires heme as cofactor.

The protein resides in the cytoplasm. It localises to the cytosol. Its subcellular location is the peroxisome matrix. It catalyses the reaction 2 H2O2 = O2 + 2 H2O. Its function is as follows. Catalyzes the degradation of hydrogen peroxide (H(2)O(2)) generated by peroxisomal oxidases to water and oxygen, thereby protecting cells from the toxic effects of hydrogen peroxide. This chain is Catalase, found in Soldanella alpina (Alpine snowbell).